The chain runs to 235 residues: Large ribosomal subunit protein uL1 (235 aa).

The protein belongs to the universal ribosomal protein uL1 family. As to quaternary structure, part of the 50S ribosomal subunit.

Its function is as follows. Binds directly to 23S rRNA. The L1 stalk is quite mobile in the ribosome, and is involved in E site tRNA release. Protein L1 is also a translational repressor protein, it controls the translation of the L11 operon by binding to its mRNA. This is Large ribosomal subunit protein uL1 from Solidesulfovibrio magneticus (strain ATCC 700980 / DSM 13731 / RS-1) (Desulfovibrio magneticus).